Consider the following 23-residue polypeptide: M-myrmeciitoxin-Mp2b (23 aa).

At Gln23 the chain carries Glutamine amide.

It belongs to the formicidae venom precursor-01 superfamily. Ant pilosulin family. Heterodimer with M-MIITX-Mp2a (pilosulin-3a) (AC Q26464); disulfide-linked. Only heterodimers (and not monomers) have been identified in the venom. In terms of tissue distribution, expressed by the venom gland.

It localises to the secreted. Heterodimer protein that may serve both defensive (pain-inducing) and predatory (insecticidal) roles. Has membrane-disrupting activity and shows induction of non-specific calcium influx into cells,. Shows broad-spectrum activity against a diverse range of bacteria, and cell lines, as well as hemolytic activity (EC(50)=2.18 uM). In vivo, shows moderate insecticidal activity against D.melanogaster and potent anthelmintic activity against the veterinary nematode H.contortus. In addition, intraplantar injection into mice induces nocifensive behavior and mechanical allodynia. This is M-myrmeciitoxin-Mp2b from Myrmecia pilosula (Jack jumper ant).